A 661-amino-acid chain; its full sequence is 72 kDa type IV collagenase (661 aa).

The first 30 residues, 1 to 30, serve as a signal peptide directing secretion; it reads MTEARVSRGALAALLRALCALGCLLGRAAA. The propeptide at 31–110 is activation peptide; the sequence is APSPIIKFPG…PRCGNPDVAN (80 aa). Positions 101 to 108 match the Cysteine switch motif; the sequence is PRCGNPDV. A Zn(2+)-binding site is contributed by Cys-103. The tract at residues 111 to 222 is collagenase-like 1; the sequence is YNFFPRKPKW…LRTLGEGQVV (112 aa). The Ca(2+) site is built by Asp-135 and Asp-169. 2 residues coordinate Zn(2+): His-179 and Asp-181. The Ca(2+) site is built by Asp-186 and Gly-187. His-194 contacts Zn(2+). Gly-201, Gly-203, and Asp-205 together coordinate Ca(2+). A Zn(2+)-binding site is contributed by His-207. Residues Asp-209, Asp-210, and Glu-212 each coordinate Ca(2+). A collagen-binding region spans residues 223–397; that stretch reads RVKYGNADGE…WGFCPDQGYS (175 aa). Fibronectin type-II domains are found at residues 229–277, 287–335, and 345–393; these read ADGE…FCPH, ADGQ…FCPE, and SEGA…FCPD. 6 disulfide bridges follow: Cys-234/Cys-260, Cys-248/Cys-275, Cys-292/Cys-318, Cys-306/Cys-333, Cys-350/Cys-376, and Cys-364/Cys-391. A collagenase-like 2 region spans residues 398–466; the sequence is LFLVAAHEFG…GPTPTLGPVT (69 aa). His-404 is a binding site for Zn(2+). The active site involves Glu-405. Positions 408 and 414 each coordinate Zn(2+). Residues 415 to 661 are required for inhibitor TIMP2 binding; the sequence is SQDPGALMAP…GSIKSDWLGC (247 aa). Hemopexin repeat units lie at residues 469–517, 518–564, 566–614, and 615–661; these read LCKQ…WPEL, PEKI…GLPP, VQKV…WNAI, and PDNL…WLGC. Residues Cys-470 and Cys-661 are joined by a disulfide bond. Ca(2+)-binding residues include Asp-477, Asp-522, and Asp-570. N-linked (GlcNAc...) asparagine glycosylation occurs at Asn-574. Asp-619 is a Ca(2+) binding site. Asn-643 carries N-linked (GlcNAc...) asparagine glycosylation.

The protein belongs to the peptidase M10A family. In terms of assembly, interacts (via the C-terminal hemopexin-like domains-containing region) with the integrin alpha-V/beta-3; the interaction promotes vascular invasion in angiogenic vessels and melamoma cells. Interacts (via the C-terminal PEX domain) with TIMP2 (via the C-terminal); the interaction inhibits the degradation activity. Interacts with GSK3B. Ca(2+) serves as cofactor. Requires Zn(2+) as cofactor. Phosphorylation on multiple sites modulates enzymatic activity. Phosphorylated by PKC in vitro. Post-translationally, the propeptide is processed by MMP14 (MT-MMP1) and MMP16 (MT-MMP3). Autocatalytic cleavage in the C-terminal produces the anti-angiogenic peptide, PEX. This processing appears to be facilitated by binding integrinv/beta3.

It is found in the secreted. It localises to the extracellular space. Its subcellular location is the extracellular matrix. The protein resides in the membrane. The protein localises to the nucleus. The enzyme catalyses Cleavage of gelatin type I and collagen types IV, V, VII, X. Cleaves the collagen-like sequence Pro-Gln-Gly-|-Ile-Ala-Gly-Gln.. Functionally, ubiquitinous metalloproteinase that is involved in diverse functions such as remodeling of the vasculature, angiogenesis, tissue repair, tumor invasion, inflammation, and atherosclerotic plaque rupture. As well as degrading extracellular matrix proteins, can also act on several nonmatrix proteins such as big endothelial 1 and beta-type CGRP promoting vasoconstriction. Also cleaves KISS at a Gly-|-Leu bond. Appears to have a role in myocardial cell death pathways. Contributes to myocardial oxidative stress by regulating the activity of GSK3beta. Cleaves GSK3beta in vitro. Involved in the formation of the fibrovascular tissues. PEX, the C-terminal non-catalytic fragment of MMP2, possesses anti-angiogenic and anti-tumor properties and inhibits cell migration and cell adhesion to FGF2 and vitronectin. Ligand for integrin alpha-v/beta-3 on the surface of blood vessels. This Bos taurus (Bovine) protein is 72 kDa type IV collagenase (MMP2).